Reading from the N-terminus, the 181-residue chain is ATP-dependent protease subunit HslV (181 aa).

The active site involves threonine 7. Alanine 166, cysteine 169, and threonine 172 together coordinate Na(+).

It belongs to the peptidase T1B family. HslV subfamily. In terms of assembly, a double ring-shaped homohexamer of HslV is capped on each side by a ring-shaped HslU homohexamer. The assembly of the HslU/HslV complex is dependent on binding of ATP.

Its subcellular location is the cytoplasm. It carries out the reaction ATP-dependent cleavage of peptide bonds with broad specificity.. With respect to regulation, allosterically activated by HslU binding. Functionally, protease subunit of a proteasome-like degradation complex believed to be a general protein degrading machinery. This chain is ATP-dependent protease subunit HslV, found in Anaeromyxobacter dehalogenans (strain 2CP-C).